The sequence spans 647 residues: Threonine--tRNA ligase (647 aa).

Residues 1 to 61 (MINITFPDGA…TEDGSIEIVT (61 aa)) enclose the TGS domain. Positions 242–540 (DHRKLGKELD…LIENYKGAFP (299 aa)) are catalytic. The Zn(2+) site is built by C336, H387, and H517.

Belongs to the class-II aminoacyl-tRNA synthetase family. Homodimer. It depends on Zn(2+) as a cofactor.

It localises to the cytoplasm. It carries out the reaction tRNA(Thr) + L-threonine + ATP = L-threonyl-tRNA(Thr) + AMP + diphosphate + H(+). Its function is as follows. Catalyzes the attachment of threonine to tRNA(Thr) in a two-step reaction: L-threonine is first activated by ATP to form Thr-AMP and then transferred to the acceptor end of tRNA(Thr). Also edits incorrectly charged L-seryl-tRNA(Thr). The protein is Threonine--tRNA ligase of Streptococcus pneumoniae serotype 19F (strain G54).